Here is a 42-residue protein sequence, read N- to C-terminus: Delta-hexatoxin-Iw1a (42 aa).

Cystine bridges form between C1/C15, C8/C20, C14/C31, and C16/C42.

It belongs to the neurotoxin 06 (delta-actx) family. Expressed by the venom gland.

The protein localises to the secreted. In terms of biological role, inhibits tetrodotoxin-sensitive sodium channels by binding to site 3. It slows the inactivation, causes a prolongation of action potential duration resulting in repetitive firing in autonomic and motor nerve fibers. Does not depolarize the resting potential. Does not affect tetrodotoxin-resistant sodium channels. This lethal neurotoxin is active on both insect and mammalian voltage-gated sodium channels (Nav). This is Delta-hexatoxin-Iw1a from Illawarra wisharti (Illawarra funnel-web spider).